The chain runs to 141 residues: HTH-type transcriptional repressor NsrR (141 aa).

The 128-residue stretch at Gln-2–Glu-129 folds into the HTH rrf2-type domain. Positions Ile-28–Arg-51 form a DNA-binding region, H-T-H motif. [2Fe-2S] cluster contacts are provided by Cys-91, Cys-96, and Cys-102.

[2Fe-2S] cluster is required as a cofactor.

Nitric oxide-sensitive repressor of genes involved in protecting the cell against nitrosative stress. May require iron for activity. This Escherichia coli O127:H6 (strain E2348/69 / EPEC) protein is HTH-type transcriptional repressor NsrR.